The sequence spans 424 residues: Circumsporozoite protein (424 aa).

The N-terminal stretch at 1-18 (MMRKLAILSVSSFLFVEA) is a signal peptide. Positions 69 to 339 (SRSLGENDDG…VKNNNNEEPS (271 aa)) are disordered. Positions 85–106 (NNREGKDEDKRDGNNEDNETLR) are enriched in basic and acidic residues. The required for the binding to heparan sulfate proteoglycans (HSPGs) on the surface of host hepatocytes stretch occupies residues 104-111 (TLRKPKHK). Positions 112–116 (KLKQP) are region I; contains the proteolytic cleavage site. Over residues 120–300 (NPDPNANPNV…PNANPNANPN (181 aa)) the composition is skewed to low complexity. 44 repeat units span residues 123 to 126 (PNAN), 127 to 130 (PNVD), 131 to 134 (PNAN), 135 to 138 (PNVD), 139 to 142 (PNAN), 143 to 146 (PNVD), 147 to 150 (PNAN), 151 to 154 (PNAN), 155 to 158 (PNAN), 159 to 162 (PNAN), 163 to 166 (PNAN), 167 to 170 (PNAN), 171 to 174 (PNAN), 175 to 178 (PNAN), 179 to 182 (PNAN), 183 to 186 (PNAN), 187 to 190 (PNAN), 191 to 194 (PNAN), 195 to 198 (PNAN), 199 to 202 (PNAN), 203 to 206 (PNAN), 207 to 210 (PNAN), 211 to 214 (PNAN), 215 to 218 (PNAN), 219 to 222 (PNAN), 223 to 226 (PNAN), 227 to 230 (PNAN), 231 to 234 (PNAN), 235 to 238 (PNAN), 239 to 242 (PNAN), 243 to 246 (PNAN), 247 to 250 (PNAN), 251 to 254 (PNAN), 255 to 258 (PNAN), 259 to 262 (PNAN), 263 to 266 (PNAN), 267 to 270 (PNAN), 271 to 274 (PNAN), 275 to 278 (PNAN), 279 to 282 (PNAN), 283 to 286 (PNAN), 287 to 290 (PNAN), 291 to 294 (PNAN), and 295 to 298 (PNAN). Positions 123–298 (PNANPNVDPN…ANPNANPNAN (176 aa)) are 44 X 4 AA tandem repeats of P-N-[AV]-[ND]. Residues 301-316 (KNNQGNGQGHNMPNDP) are compositionally biased toward polar residues. Over residues 322–336 (ENANANNAVKNNNNE) the composition is skewed to low complexity. The TSP type-1 domain occupies 349-402 (KIQNSLSTEWSPCSVTCGNGIQVRIKPGSANKPKDELDYENDIEKKICKMEKCS). Disulfide bonds link C361-C396 and C365-C401. O-linked (Fuc) threonine glycosylation is present at T364. C401 carries the GPI-anchor amidated cysteine lipid modification. A propeptide spans 402-424 (SSVFNVVNSSIGLIMVLSFLFLN) (removed in mature form).

This sequence belongs to the plasmodium circumsporozoite protein family. During host cell invasion, proteolytically cleaved at the cell membrane in the region I by a papain-like cysteine protease of parasite origin. Cleavage is triggered by the sporozoite contact with highly sulfated heparan sulfate proteoglycans (HSPGs) present on the host hepatocyte cell surface. Cleavage exposes the TSP type-1 (TSR) domain and is required for productive invasion of host hepatocytes but not for adhesion to the host cell membrane. Cleavage is dispensable for sporozoite development in the oocyst, motility and for traversal of host and vector cells. Post-translationally, O-glycosylated; maybe by POFUT2.

The protein localises to the cell membrane. The protein resides in the cytoplasm. Essential sporozoite protein. In the mosquito vector, required for sporozoite development in the oocyst, migration through the vector hemolymph and entry into the vector salivary glands. In the vertebrate host, required for sporozoite migration through the host dermis and infection of host hepatocytes. Binds to highly sulfated heparan sulfate proteoglycans (HSPGs) on the surface of host hepatocytes. In terms of biological role, in the vertebrate host, binds to highly sulfated heparan sulfate proteoglycans (HSPGs) on the surface of host hepatocytes and is required for sporozoite invasion of the host hepatocytes. This chain is Circumsporozoite protein, found in Plasmodium falciparum (isolate t4 / Thailand).